The chain runs to 411 residues: Snake venom metalloproteinase VMP1 (411 aa).

The N-terminal stretch at M1–S20 is a signal peptide. Positions I21 to P189 are excised as a propeptide. The region spanning R197–P393 is the Peptidase M12B domain. The Ca(2+) site is built by E200 and D284. Cystine bridges form between C308/C388, C348/C372, and C350/C355. N-linked (GlcNAc...) asparagine glycosylation occurs at N311. H333 serves as a coordination point for Zn(2+). Residue E334 is part of the active site. The Zn(2+) site is built by H337 and H343. Ca(2+) contacts are provided by C388, N391, V403, N406, L408, and E410.

Belongs to the venom metalloproteinase (M12B) family. P-I subfamily. In terms of assembly, monomer. The cofactor is Zn(2+). As to expression, expressed by the venom gland.

The protein localises to the secreted. With respect to regulation, inhibited by EDTA and 1,10-phenanthroline, but not by PMSF. This venom zinc protease has fibrinolytic activity. The recombinant enzyme cleaves both alpha- (FGA) and beta-chains (FGB) of fibrinogen, but not the gamma-chain. The recombinant protein does not produce hemorrhage in mice and does not have effect on ADP- or collagen-stimulated platelet aggregation. This Agkistrodon piscivorus leucostoma (Western cottonmouth) protein is Snake venom metalloproteinase VMP1.